The chain runs to 438 residues: GTPase Obg (438 aa).

An Obg domain is found at 6–164; it reads AEFVDRVKIF…RWLELELKIL (159 aa). Positions 165 to 335 constitute an OBG-type G domain; it reads ADVGLVGYPN…LLDRVASIVR (171 aa). GTP is bound by residues 171 to 178, 196 to 200, 217 to 220, 287 to 290, and 316 to 318; these read GYPNVGKS, FTTLV, DIPG, NKID, and SAV. Residues Ser178 and Thr198 each contribute to the Mg(2+) site. One can recognise an OCT domain in the interval 358–438; sequence VWRKLPERFE…IGNFEFEYRE (81 aa).

This sequence belongs to the TRAFAC class OBG-HflX-like GTPase superfamily. OBG GTPase family. Monomer. Mg(2+) is required as a cofactor.

Its subcellular location is the cytoplasm. An essential GTPase which binds GTP, GDP and possibly (p)ppGpp with moderate affinity, with high nucleotide exchange rates and a fairly low GTP hydrolysis rate. Plays a role in control of the cell cycle, stress response, ribosome biogenesis and in those bacteria that undergo differentiation, in morphogenesis control. The polypeptide is GTPase Obg (Thermotoga neapolitana (strain ATCC 49049 / DSM 4359 / NBRC 107923 / NS-E)).